Reading from the N-terminus, the 486-residue chain is Homoserine O-acetyltransferase (486 aa).

The AB hydrolase-1 domain occupies 66 to 436 (NVLVICHALT…PEGHDAFLLE (371 aa)). Residue S162 is part of the active site. The Nucleophile role is filled by S162. Positions 248-274 (KFSRRSPSIAQQQKAQKAEVRKPSTVS) are disordered. Residues 250–262 (SRRSPSIAQQQKA) show a composition bias toward polar residues. Active-site residues include D401 and H430.

This sequence belongs to the AB hydrolase superfamily. MetX family.

The enzyme catalyses L-homoserine + acetyl-CoA = O-acetyl-L-homoserine + CoA. It participates in amino-acid biosynthesis; L-methionine biosynthesis via de novo pathway; O-acetyl-L-homoserine from L-homoserine: step 1/1. Commits homoserine to the methionine biosynthesis pathway by catalyzing its O-acetylation. The sequence is that of Homoserine O-acetyltransferase (MET2) from Saccharomyces pastorianus (Lager yeast).